We begin with the raw amino-acid sequence, 311 residues long: Energy-coupling factor transporter ATP-binding protein EcfA (311 aa).

The region spanning 2 to 237 (IELRDLSYSY…AELIRRASLR (236 aa)) is the ABC transporter domain. Position 35–42 (35–42 (GPNGAGKS)) interacts with ATP.

The protein belongs to the ABC transporter superfamily. Energy-coupling factor EcfA family. In terms of assembly, forms a stable energy-coupling factor (ECF) transporter complex composed of 2 membrane-embedded substrate-binding proteins (S component), 2 ATP-binding proteins (A component) and 2 transmembrane proteins (T component).

The protein localises to the cell membrane. In terms of biological role, ATP-binding (A) component of a common energy-coupling factor (ECF) ABC-transporter complex. Unlike classic ABC transporters this ECF transporter provides the energy necessary to transport a number of different substrates. This chain is Energy-coupling factor transporter ATP-binding protein EcfA, found in Methanothermobacter thermautotrophicus (strain ATCC 29096 / DSM 1053 / JCM 10044 / NBRC 100330 / Delta H) (Methanobacterium thermoautotrophicum).